Reading from the N-terminus, the 1709-residue chain is Sialoadhesin (1709 aa).

The N-terminal stretch at 1 to 19 (MGFLPKLLLLASFFPAGQA) is a signal peptide. The 117-residue stretch at 20–136 (SWGVSSPQDV…DVKGTLVTVT (117 aa)) folds into the Ig-like V-type domain. Residues 20–1641 (SWGVSSPQDV…ALHRLHQFQQ (1622 aa)) lie on the Extracellular side of the membrane. 4 disulfide bridges follow: C36-C166, C41-C98, C160-C217, and C262-C305. N-acetylneuraminate is bound by residues Y63, R116, and 122–126 (VNRWS). Ig-like C2-type domains are found at residues 139–233 (PRVP…IHLQ), 238–320 (PKGV…PPIS), 326–405 (AEVQ…GPVS), 411–507 (PPLT…LDFH), 511–593 (ARLL…AVLT), 601–705 (PTFT…ATFN), 708–785 (ATVL…AQLS), 799–894 (PKLS…FQVR), 898–977 (VQVS…APIS), 984–1083 (PRHV…ADFD), 1085–1165 (QAVN…RPIT), and 1176–1248 (RLTY…SPLG). N159 carries an N-linked (GlcNAc...) asparagine glycan. Residues N265 and N339 are each glycosylated (N-linked (GlcNAc...) asparagine). Cystine bridges form between C346/C390 and C433/C491. N-linked (GlcNAc...) asparagine glycosylation is present at N499. 2 disulfide bridges follow: C531–C575 and C624–C689. N-linked (GlcNAc...) asparagine glycosylation is found at N697, N726, N730, and N741. 2 cysteine pairs are disulfide-bonded: C729/C774 and C817/C876. Residue N886 is glycosylated (N-linked (GlcNAc...) asparagine). Disulfide bonds link C916–C960 and C1005–C1067. Residues N1104 and N1138 are each glycosylated (N-linked (GlcNAc...) asparagine). Cystine bridges form between C1107-C1149 and C1193-C1241. Residue N1251 is glycosylated (N-linked (GlcNAc...) asparagine). Ig-like C2-type domains lie at 1259-1341 (EGVR…AALQ), 1350-1442 (VLSS…RLQV), 1445-1528 (ARVV…VMLR), and 1536-1631 (PTMM…FGVR). Intrachain disulfides connect C1281/C1324 and C1367/C1425. N-linked (GlcNAc...) asparagine glycosylation is found at N1462 and N1476. 2 disulfide bridges follow: C1465/C1511 and C1554/C1613. Residues 1642 to 1662 (LLWVLGLLVGLLLLLLGLGAC) traverse the membrane as a helical segment. The Cytoplasmic segment spans residues 1663 to 1709 (YTWRRRRVCKQSMGENSVEMAFQKETTQLIDPDAATCETSTCAPPLG).

The protein belongs to the immunoglobulin superfamily. SIGLEC (sialic acid binding Ig-like lectin) family. Interacts with TYROBP. Interacts with CLEC10A. In terms of tissue distribution, expressed by macrophages in various tissues. High levels are found in spleen, lymph node, perivascular macrophages in brain and lower levels in bone marrow, liver Kupffer cells and lamina propria of colon and lung. Also expressed by inflammatory macrophages in rheumatoid arthritis.

It is found in the cell membrane. The protein localises to the secreted. Functionally, macrophage-restricted adhesion molecule that mediates sialic-acid dependent binding to lymphocytes, including granulocytes, monocytes, natural killer cells, B-cells and CD8 T-cells. Plays a crucial role in limiting bacterial dissemination by engaging sialylated bacteria to promote effective phagocytosis and antigen presentation for the adaptive immune response. Mediates the uptake of various enveloped viruses via sialic acid recognition and subsequently induces the formation of intracellular compartments filled with virions (VCCs). In turn, enhances macrophage-to-T-cell transmission of several viruses including HIV-1 or SARS-CoV-2. Acts as an endocytic receptor mediating clathrin dependent endocytosis. Preferentially binds to alpha-2,3-linked sialic acid. Binds to SPN/CD43 on T-cells. May play a role in hemopoiesis. Plays a role in the inhibition of antiviral innate immune by promoting TBK1 degradation via TYROBP and TRIM27-mediated ubiquitination. In terms of biological role, (Microbial infection) Facilitates viral cytoplasmic entry into activated dendritic cells via recognition of sialylated gangliosides pesent on viral membrane. This Homo sapiens (Human) protein is Sialoadhesin (SIGLEC1).